Consider the following 323-residue polypeptide: Phospho-N-acetylmuramoyl-pentapeptide-transferase (323 aa).

9 helical membrane-spanning segments follow: residues asparagine 3–isoleucine 23, methionine 52–leucine 72, methionine 77–tryptophan 97, isoleucine 121–histidine 141, isoleucine 145–phenylalanine 165, leucine 175–tryptophan 195, isoleucine 200–asparagine 220, isoleucine 226–histidine 248, and isoleucine 301–leucine 321.

Belongs to the glycosyltransferase 4 family. MraY subfamily. The cofactor is Mg(2+).

Its subcellular location is the cell membrane. The catalysed reaction is UDP-N-acetyl-alpha-D-muramoyl-L-alanyl-gamma-D-glutamyl-L-lysyl-D-alanyl-D-alanine + di-trans,octa-cis-undecaprenyl phosphate = Mur2Ac(oyl-L-Ala-gamma-D-Glu-L-Lys-D-Ala-D-Ala)-di-trans,octa-cis-undecaprenyl diphosphate + UMP. Its pathway is cell wall biogenesis; peptidoglycan biosynthesis. Catalyzes the initial step of the lipid cycle reactions in the biosynthesis of the cell wall peptidoglycan: transfers peptidoglycan precursor phospho-MurNAc-pentapeptide from UDP-MurNAc-pentapeptide onto the lipid carrier undecaprenyl phosphate, yielding undecaprenyl-pyrophosphoryl-MurNAc-pentapeptide, known as lipid I. The protein is Phospho-N-acetylmuramoyl-pentapeptide-transferase of Levilactobacillus brevis (strain ATCC 367 / BCRC 12310 / CIP 105137 / JCM 1170 / LMG 11437 / NCIMB 947 / NCTC 947) (Lactobacillus brevis).